The primary structure comprises 437 residues: Glutamate-1-semialdehyde 2,1-aminomutase (437 aa).

K272 carries the N6-(pyridoxal phosphate)lysine modification.

It belongs to the class-III pyridoxal-phosphate-dependent aminotransferase family. HemL subfamily. Homodimer. Requires pyridoxal 5'-phosphate as cofactor.

Its subcellular location is the cytoplasm. The catalysed reaction is (S)-4-amino-5-oxopentanoate = 5-aminolevulinate. The protein operates within porphyrin-containing compound metabolism; protoporphyrin-IX biosynthesis; 5-aminolevulinate from L-glutamyl-tRNA(Glu): step 2/2. The polypeptide is Glutamate-1-semialdehyde 2,1-aminomutase (Moorella thermoacetica (strain ATCC 39073 / JCM 9320)).